Here is a 336-residue protein sequence, read N- to C-terminus: Anthranilate phosphoribosyltransferase (336 aa).

5-phospho-alpha-D-ribose 1-diphosphate is bound by residues G80, 83-84 (GD), T88, 90-93 (NIST), 108-116 (KHGNRSITS), and S120. Anthranilate is bound at residue G80. S92 contacts Mg(2+). N111 is an anthranilate binding site. An anthranilate-binding site is contributed by R166. 2 residues coordinate Mg(2+): D224 and E225.

Belongs to the anthranilate phosphoribosyltransferase family. In terms of assembly, homodimer. It depends on Mg(2+) as a cofactor.

The catalysed reaction is N-(5-phospho-beta-D-ribosyl)anthranilate + diphosphate = 5-phospho-alpha-D-ribose 1-diphosphate + anthranilate. The protein operates within amino-acid biosynthesis; L-tryptophan biosynthesis; L-tryptophan from chorismate: step 2/5. Functionally, catalyzes the transfer of the phosphoribosyl group of 5-phosphorylribose-1-pyrophosphate (PRPP) to anthranilate to yield N-(5'-phosphoribosyl)-anthranilate (PRA). The protein is Anthranilate phosphoribosyltransferase of Caldicellulosiruptor saccharolyticus (strain ATCC 43494 / DSM 8903 / Tp8T 6331).